A 742-amino-acid chain; its full sequence is Feeding circuit activating peptides (742 aa).

The N-terminal stretch at 1 to 22 (MTFAASFRALLCVLFCAALVHC) is a signal peptide. The propeptide occupies 23-98 (KTRTKRYVPH…YGALADRDVD (76 aa)). Residues 117-131 (GSLDAIPQDTDASSD) constitute a propeptide, connecting peptide. 20 propeptides span residues 164–168 (GSGAE), 202–220 (RGTG…PWGS), 236–253 (DTEL…TEVN), 271–275 (SGEAG), 293–297 (ADDQG), 315–321 (FDNSAGE), 339–341 (AGD), 359–366 (FDNDISGQ), 384–388 (SDQDN), 406–410 (ADDDG), 428–432 (ADEDD), 450–454 (GDEDD), 472–476 (ADEDD), 494–498 (SDEDD), 516–520 (SDEDD), 538–542 (ADEDD), 560–564 (NSPGL), 582–592 (NNEYYSGAENE), 610–614 (DQPGE), and 647–742 (NSAD…AGQM).

In terms of tissue distribution, expressed in pleural, pedal, abdominal, buccal and cerebral ganglia.

It is found in the secreted. Initiates organized rhythmic motor output of feeding circuit. In Aplysia californica (California sea hare), this protein is Feeding circuit activating peptides.